The sequence spans 241 residues: Xyloglucan-specific endo-beta-1,4-glucanase A (241 aa).

A signal peptide spans 1–16 (MKVLALSALLSLASAA). Asn47 carries N-linked (GlcNAc...) asparagine glycosylation.

Belongs to the glycosyl hydrolase 12 (cellulase H) family.

It is found in the secreted. The catalysed reaction is xyloglucan + H2O = xyloglucan oligosaccharides.. Catalyzes endohydrolysis of 1,4-beta-D-glucosidic linkages in xyloglucan with retention of the beta-configuration of the glycosyl residues. Specific for xyloglucan and does not hydrolyze other cell wall components. The protein is Xyloglucan-specific endo-beta-1,4-glucanase A (xgeA) of Aspergillus niger.